The following is a 74-amino-acid chain: Heat shock factor-binding protein 1-like protein 1 (74 aa).

The stretch at 12–65 (RALRDAAENLFQELQEHFQALTATLNLRMEEMGNRIEDLQKNVKDLMVQAGIEN) forms a coiled coil.

This sequence belongs to the HSBP1 family.

The protein is Heat shock factor-binding protein 1-like protein 1 (HSBP1L1) of Homo sapiens (Human).